We begin with the raw amino-acid sequence, 814 residues long: Lon protease 1 (814 aa).

A compositionally biased stretch (basic and acidic residues) spans 1-17; the sequence is MTDDRDKTNEDPEKIIE. Positions 1–28 are disordered; that stretch reads MTDDRDKTNEDPEKIIEADFNPEDPDDA. The Lon N-terminal domain maps to 49 to 245; the sequence is LPIIPLRPRP…KVLVLLKKEL (197 aa). 398–405 contacts ATP; sequence GPPGVGKT. The 182-residue stretch at 633-814 folds into the Lon proteolytic domain; the sequence is EDVPGVVTGL…YRDVYQVAFG (182 aa). Active-site residues include Ser721 and Lys764.

This sequence belongs to the peptidase S16 family. In terms of assembly, homohexamer. Organized in a ring with a central cavity.

The protein localises to the cytoplasm. The catalysed reaction is Hydrolysis of proteins in presence of ATP.. Functionally, ATP-dependent serine protease that mediates the selective degradation of mutant and abnormal proteins as well as certain short-lived regulatory proteins. Required for cellular homeostasis and for survival from DNA damage and developmental changes induced by stress. Degrades polypeptides processively to yield small peptide fragments that are 5 to 10 amino acids long. Binds to DNA in a double-stranded, site-specific manner. This is Lon protease 1 from Syntrophotalea carbinolica (strain DSM 2380 / NBRC 103641 / GraBd1) (Pelobacter carbinolicus).